Reading from the N-terminus, the 196-residue chain is MIPIVVEETGRGERAFDIYSRLLRERIVFLGEQVTNDSANRIVAQLLFLEAEDPEKDIFLYINSPGGSVYDGFGIFDTIQHIKPDVHTVCVGLAASMGAFLLCAGAKGKRSSLQHSRIMIHQPLGGARGQATDIRIQADEILFLKQKLNTELSNRTGQPLSKIAEDTDRDFYMSPSEAISYGIIDNVLNKKPVSVL.

The active-site Nucleophile is the S96. Residue H121 is part of the active site.

It belongs to the peptidase S14 family. In terms of assembly, fourteen ClpP subunits assemble into 2 heptameric rings which stack back to back to give a disk-like structure with a central cavity, resembling the structure of eukaryotic proteasomes.

Its subcellular location is the cytoplasm. The enzyme catalyses Hydrolysis of proteins to small peptides in the presence of ATP and magnesium. alpha-casein is the usual test substrate. In the absence of ATP, only oligopeptides shorter than five residues are hydrolyzed (such as succinyl-Leu-Tyr-|-NHMec, and Leu-Tyr-Leu-|-Tyr-Trp, in which cleavage of the -Tyr-|-Leu- and -Tyr-|-Trp bonds also occurs).. Its function is as follows. Cleaves peptides in various proteins in a process that requires ATP hydrolysis. Has a chymotrypsin-like activity. Plays a major role in the degradation of misfolded proteins. The chain is ATP-dependent Clp protease proteolytic subunit 1 from Prochlorococcus marinus (strain SARG / CCMP1375 / SS120).